Reading from the N-terminus, the 395-residue chain is Elongation factor Tu (395 aa).

One can recognise a tr-type G domain in the interval 10–204 (KPHVNIGTIG…TVDSYIPEPK (195 aa)). The G1 stretch occupies residues 19-26 (GHVDHGKT). 19 to 26 (GHVDHGKT) serves as a coordination point for GTP. Thr-26 serves as a coordination point for Mg(2+). Residues 60 to 64 (GITIN) are G2. The G3 stretch occupies residues 81-84 (DAPG). Residues 81–85 (DAPGH) and 136–139 (NKTD) each bind GTP. Residues 136-139 (NKTD) are G4. The G5 stretch occupies residues 174 to 176 (SAL).

Belongs to the TRAFAC class translation factor GTPase superfamily. Classic translation factor GTPase family. EF-Tu/EF-1A subfamily. In terms of assembly, monomer.

The protein localises to the cytoplasm. The enzyme catalyses GTP + H2O = GDP + phosphate + H(+). Functionally, GTP hydrolase that promotes the GTP-dependent binding of aminoacyl-tRNA to the A-site of ribosomes during protein biosynthesis. The chain is Elongation factor Tu from Leuconostoc citreum (strain KM20).